We begin with the raw amino-acid sequence, 332 residues long: Anthranilate phosphoribosyltransferase (332 aa).

Residues Gly-79, 82-83 (GD), Ser-87, 89-92 (NIST), 107-115 (KHGNRSVSS), and Ser-119 contribute to the 5-phospho-alpha-D-ribose 1-diphosphate site. Residue Gly-79 participates in anthranilate binding. Ser-91 contacts Mg(2+). Asn-110 provides a ligand contact to anthranilate. Arg-165 serves as a coordination point for anthranilate. Mg(2+) is bound by residues Asp-223 and Glu-224.

This sequence belongs to the anthranilate phosphoribosyltransferase family. Homodimer. It depends on Mg(2+) as a cofactor.

It carries out the reaction N-(5-phospho-beta-D-ribosyl)anthranilate + diphosphate = 5-phospho-alpha-D-ribose 1-diphosphate + anthranilate. The protein operates within amino-acid biosynthesis; L-tryptophan biosynthesis; L-tryptophan from chorismate: step 2/5. In terms of biological role, catalyzes the transfer of the phosphoribosyl group of 5-phosphorylribose-1-pyrophosphate (PRPP) to anthranilate to yield N-(5'-phosphoribosyl)-anthranilate (PRA). This is Anthranilate phosphoribosyltransferase from Sodalis glossinidius (strain morsitans).